The primary structure comprises 488 residues: Alkaline nuclease (488 aa).

It belongs to the herpesviridae alkaline nuclease family. Interacts with major DNA-binding protein; this interaction increases the nuclease processivity of the alkaline exonuclease.

Its subcellular location is the host nucleus. The protein resides in the host cytoplasm. Functionally, plays a role in processing non linear or branched viral DNA intermediates in order to promote the production of mature packaged unit-length linear progeny viral DNA molecules. Exhibits endonuclease and exonuclease activities and accepts both double-stranded and single-stranded DNA as substrate. Exonuclease digestion of DNA is in the 5'-&gt; 3' direction and the products are 5'-monophosphate nucleosides. Additionally, forms a recombinase with the major DNA-binding protein, which displays strand exchange activity. In Homo sapiens (Human), this protein is Alkaline nuclease (U70).